Here is a 481-residue protein sequence, read N- to C-terminus: F-box protein At1g49360 (481 aa).

Residues 105–156 (LKEDLFLPSDLVRLILSRLSFKDNIRSSTVCKAWGDIAASVRVKSRRCWLLY) enclose the F-box domain.

The polypeptide is F-box protein At1g49360 (Arabidopsis thaliana (Mouse-ear cress)).